A 192-amino-acid chain; its full sequence is MMEVPREIIEKLEIFQKLVKKWNKSINLVSDNTIHNFWQRHILDSLQLMQYIDNKEIHLVDIGSGAGFPGIVLSIAGVAKVSLIEADLRKCIFLEKASKISNNNIQIINQRIEKVEIDCSILTCRAFSKLNTIFNCIKNISVQEKFLLLKGKNYLTEIVEAKEMWLFDYLIHQSITCEEGKILEVSNLTKII.

S-adenosyl-L-methionine is bound by residues G63, F68, 112 to 113, and R125; that span reads IE.

Belongs to the methyltransferase superfamily. RNA methyltransferase RsmG family.

The protein localises to the cytoplasm. It carries out the reaction guanosine(527) in 16S rRNA + S-adenosyl-L-methionine = N(7)-methylguanosine(527) in 16S rRNA + S-adenosyl-L-homocysteine. In terms of biological role, specifically methylates the N7 position of guanine in position 527 of 16S rRNA. This Rickettsia felis (strain ATCC VR-1525 / URRWXCal2) (Rickettsia azadi) protein is Ribosomal RNA small subunit methyltransferase G.